The following is a 329-amino-acid chain: Biotin synthase (329 aa).

The Radical SAM core domain occupies 36–260; it reads GEIQLCTLLS…VAVARITMPK (225 aa). Positions 51, 55, and 58 each coordinate [4Fe-4S] cluster. [2Fe-2S] cluster contacts are provided by Cys-95, Cys-126, Cys-186, and Arg-264.

Belongs to the radical SAM superfamily. Biotin synthase family. Homodimer. The cofactor is [4Fe-4S] cluster. Requires [2Fe-2S] cluster as cofactor.

It carries out the reaction (4R,5S)-dethiobiotin + (sulfur carrier)-SH + 2 reduced [2Fe-2S]-[ferredoxin] + 2 S-adenosyl-L-methionine = (sulfur carrier)-H + biotin + 2 5'-deoxyadenosine + 2 L-methionine + 2 oxidized [2Fe-2S]-[ferredoxin]. The protein operates within cofactor biosynthesis; biotin biosynthesis; biotin from 7,8-diaminononanoate: step 2/2. Catalyzes the conversion of dethiobiotin (DTB) to biotin by the insertion of a sulfur atom into dethiobiotin via a radical-based mechanism. The protein is Biotin synthase of Sphingopyxis alaskensis (strain DSM 13593 / LMG 18877 / RB2256) (Sphingomonas alaskensis).